Consider the following 331-residue polypeptide: tRNA N6-adenosine threonylcarbamoyltransferase (331 aa).

3 residues coordinate a divalent metal cation: histidine 108, histidine 112, and tyrosine 129. Residues 129 to 133, aspartate 161, glycine 176, glutamate 180, and asparagine 261 each bind substrate; that span reads YASGG. An a divalent metal cation-binding site is contributed by aspartate 289.

The protein belongs to the KAE1 / TsaD family. Component of the EKC/KEOPS complex composed of at least BUD32, CGI121, GON7, KAE1 and PCC1; the whole complex dimerizes. It depends on a divalent metal cation as a cofactor.

It localises to the cytoplasm. Its subcellular location is the nucleus. It carries out the reaction L-threonylcarbamoyladenylate + adenosine(37) in tRNA = N(6)-L-threonylcarbamoyladenosine(37) in tRNA + AMP + H(+). Its function is as follows. Component of the EKC/KEOPS complex that is required for the formation of a threonylcarbamoyl group on adenosine at position 37 (t(6)A37) in tRNAs that read codons beginning with adenine. The complex is probably involved in the transfer of the threonylcarbamoyl moiety of threonylcarbamoyl-AMP (TC-AMP) to the N6 group of A37. KAE1 likely plays a direct catalytic role in this reaction, but requires other protein(s) of the complex to fulfill this activity. The EKC/KEOPS complex also promotes both telomere uncapping and telomere elongation. The complex is required for efficient recruitment of transcriptional coactivators. In Encephalitozoon cuniculi (strain GB-M1) (Microsporidian parasite), this protein is tRNA N6-adenosine threonylcarbamoyltransferase.